Here is a 261-residue protein sequence, read N- to C-terminus: Cytochrome c oxidase subunit 3 (261 aa).

The Mitochondrial matrix portion of the chain corresponds to 1–15 (MTHQTHAYHMVNPSP). The helical transmembrane segment at 16–34 (WPLTGALSALLMTSGLIMW) threads the bilayer. At 35-40 (FHFNST) the chain is on the mitochondrial intermembrane side. A helical transmembrane segment spans residues 41 to 66 (TLLTLGLTTNMLTMYQWWRDVIREST). Residues 67 to 72 (FQGHHT) are Mitochondrial matrix-facing. A helical membrane pass occupies residues 73-105 (PTVQKGLRYGMILFIISEVLFFTGFFWAFYHSS). Over 106–128 (LAPTPELGGCWPPTGIHPLNPLE) the chain is Mitochondrial intermembrane. The chain crosses the membrane as a helical span at residues 129–152 (VPLLNTSVLLASGVSITWAHHSLM). The Mitochondrial matrix portion of the chain corresponds to 153-155 (EGN). The helical transmembrane segment at 156-183 (RNPMLQALFITIALGIYFTLLQASEYYE) threads the bilayer. The Mitochondrial intermembrane segment spans residues 184–190 (APFTISD). A helical transmembrane segment spans residues 191–223 (GVYGSTFFVATGFHGLHVIIGSTFLIVCFFRQL). The Mitochondrial matrix segment spans residues 224 to 232 (KFHFTSNHH). A helical membrane pass occupies residues 233-256 (FGFEAAAWYWHFVDVVWLFLYVSI). The Mitochondrial intermembrane segment spans residues 257–261 (YWWGS).

This sequence belongs to the cytochrome c oxidase subunit 3 family. As to quaternary structure, component of the cytochrome c oxidase (complex IV, CIV), a multisubunit enzyme composed of 14 subunits. The complex is composed of a catalytic core of 3 subunits MT-CO1, MT-CO2 and MT-CO3, encoded in the mitochondrial DNA, and 11 supernumerary subunits COX4I, COX5A, COX5B, COX6A, COX6B, COX6C, COX7A, COX7B, COX7C, COX8 and NDUFA4, which are encoded in the nuclear genome. The complex exists as a monomer or a dimer and forms supercomplexes (SCs) in the inner mitochondrial membrane with NADH-ubiquinone oxidoreductase (complex I, CI) and ubiquinol-cytochrome c oxidoreductase (cytochrome b-c1 complex, complex III, CIII), resulting in different assemblies (supercomplex SCI(1)III(2)IV(1) and megacomplex MCI(2)III(2)IV(2)).

The protein localises to the mitochondrion inner membrane. The catalysed reaction is 4 Fe(II)-[cytochrome c] + O2 + 8 H(+)(in) = 4 Fe(III)-[cytochrome c] + 2 H2O + 4 H(+)(out). Component of the cytochrome c oxidase, the last enzyme in the mitochondrial electron transport chain which drives oxidative phosphorylation. The respiratory chain contains 3 multisubunit complexes succinate dehydrogenase (complex II, CII), ubiquinol-cytochrome c oxidoreductase (cytochrome b-c1 complex, complex III, CIII) and cytochrome c oxidase (complex IV, CIV), that cooperate to transfer electrons derived from NADH and succinate to molecular oxygen, creating an electrochemical gradient over the inner membrane that drives transmembrane transport and the ATP synthase. Cytochrome c oxidase is the component of the respiratory chain that catalyzes the reduction of oxygen to water. Electrons originating from reduced cytochrome c in the intermembrane space (IMS) are transferred via the dinuclear copper A center (CU(A)) of subunit 2 and heme A of subunit 1 to the active site in subunit 1, a binuclear center (BNC) formed by heme A3 and copper B (CU(B)). The BNC reduces molecular oxygen to 2 water molecules using 4 electrons from cytochrome c in the IMS and 4 protons from the mitochondrial matrix. This Madoqua guentheri (Guenther's dik-dik) protein is Cytochrome c oxidase subunit 3 (MT-CO3).